We begin with the raw amino-acid sequence, 420 residues long: 3-phosphoshikimate 1-carboxyvinyltransferase (420 aa).

K20, S21, and R25 together coordinate 3-phosphoshikimate. K20 is a binding site for phosphoenolpyruvate. Residue R119 participates in phosphoenolpyruvate binding. Residues S161, S162, Q163, S189, D303, Q326, and K330 each coordinate 3-phosphoshikimate. Q163 contributes to the phosphoenolpyruvate binding site. D303 (proton acceptor) is an active-site residue. R334, R375, and K400 together coordinate phosphoenolpyruvate.

This sequence belongs to the EPSP synthase family. In terms of assembly, monomer.

The protein resides in the cytoplasm. The enzyme catalyses 3-phosphoshikimate + phosphoenolpyruvate = 5-O-(1-carboxyvinyl)-3-phosphoshikimate + phosphate. It participates in metabolic intermediate biosynthesis; chorismate biosynthesis; chorismate from D-erythrose 4-phosphate and phosphoenolpyruvate: step 6/7. Catalyzes the transfer of the enolpyruvyl moiety of phosphoenolpyruvate (PEP) to the 5-hydroxyl of shikimate-3-phosphate (S3P) to produce enolpyruvyl shikimate-3-phosphate and inorganic phosphate. The protein is 3-phosphoshikimate 1-carboxyvinyltransferase of Dehalococcoides mccartyi (strain ATCC BAA-2266 / KCTC 15142 / 195) (Dehalococcoides ethenogenes (strain 195)).